A 232-amino-acid chain; its full sequence is 7-cyano-7-deazaguanine synthase (232 aa).

11-21 is a binding site for ATP; the sequence is ASGGMDSATAA. Residues cysteine 192, cysteine 200, cysteine 203, and cysteine 206 each contribute to the Zn(2+) site.

Belongs to the QueC family. Zn(2+) is required as a cofactor.

The enzyme catalyses 7-carboxy-7-deazaguanine + NH4(+) + ATP = 7-cyano-7-deazaguanine + ADP + phosphate + H2O + H(+). The protein operates within purine metabolism; 7-cyano-7-deazaguanine biosynthesis. In terms of biological role, catalyzes the ATP-dependent conversion of 7-carboxy-7-deazaguanine (CDG) to 7-cyano-7-deazaguanine (preQ(0)). In Haloarcula marismortui (strain ATCC 43049 / DSM 3752 / JCM 8966 / VKM B-1809) (Halobacterium marismortui), this protein is 7-cyano-7-deazaguanine synthase.